The following is a 521-amino-acid chain: DEAD-box ATP-dependent RNA helicase 1 (521 aa).

The disordered stretch occupies residues 1–20 (MVVAMATKEEEGGPSSRVPH). The Q motif motif lies at 36–65 (CPVAHLPRLDPRLVKPLQRMGIESFFPVQV). Residues 72-302 (IGPGAFERDI…QLELQHPLLL (231 aa)) form the Helicase ATP-binding domain. 85-92 (SPTGSGKT) contacts ATP. Residues 213–216 (DETD) carry the DEAD box motif. The Helicase C-terminal domain occupies 330–480 (SLIVLLQELR…SLPEESVETL (151 aa)). Over residues 495–507 (LESEATKKSKSGD) the composition is skewed to basic and acidic residues. The segment at 495-521 (LESEATKKSKSGDKAPNASKRKRTINT) is disordered.

This sequence belongs to the DEAD box helicase family. DDX51/DBP6 subfamily.

The catalysed reaction is ATP + H2O = ADP + phosphate + H(+). This is DEAD-box ATP-dependent RNA helicase 1 from Oryza sativa subsp. japonica (Rice).